Consider the following 147-residue polypeptide: Delta-latroinsectotoxin-Lhe1a (147 aa).

ANK repeat units lie at residues 57-59, 66-78, 79-96, and 98-125; these read VSI, NNWT…IYFK, KNPA…DIEA, and TSIM…TLDE.

The protein belongs to the cationic peptide 01 (latrotoxin) family. 04 (delta-latroinsectotoxin) subfamily. In terms of assembly, homotetramer in membrane. Expressed by the venom gland.

The protein resides in the secreted. Its subcellular location is the target cell membrane. In terms of biological role, insecticidal presynaptic neurotoxin that induces massive neurotransmitter release at insect (but not vertebrate) neuromuscular junctions. Native toxin forms cation-permeable pores (with high permeability to calcium) in lipid membranes locust muscle membrane and artificial lipid bilayers. May bind to insect neurexin-1 homolog, insect adhesion G protein-coupled receptor L1 homolog, and insect receptor-type tyrosine-protein phosphatase S homolog, and induces neurotransmitter exocytosis both by forming tetrameric pores in membranes and signaling via G protein-coupled receptor. Oligomerization is a process independent of divalent cations. The chain is Delta-latroinsectotoxin-Lhe1a from Latrodectus hesperus (Western black widow spider).